We begin with the raw amino-acid sequence, 250 residues long: Flap endonuclease Xni (250 aa).

A Mg(2+)-binding site is contributed by Asp-104. The 5'-3' exonuclease domain occupies 160–249 (VQPQQLTDFW…LQGNLQQLRL (90 aa)). K(+)-binding residues include Leu-171, Ala-172, Pro-180, Val-182, and Ile-185. The tract at residues 184 to 189 (GIGPKS) is interaction with DNA.

This sequence belongs to the Xni family. Mg(2+) is required as a cofactor. The cofactor is K(+).

Functionally, has flap endonuclease activity. During DNA replication, flap endonucleases cleave the 5'-overhanging flap structure that is generated by displacement synthesis when DNA polymerase encounters the 5'-end of a downstream Okazaki fragment. This chain is Flap endonuclease Xni, found in Sodalis glossinidius (strain morsitans).